A 308-amino-acid polypeptide reads, in one-letter code: Ferrochelatase (308 aa).

Positions 167 and 239 each coordinate Fe cation.

Belongs to the ferrochelatase family.

It is found in the cytoplasm. It carries out the reaction heme b + 2 H(+) = protoporphyrin IX + Fe(2+). The protein operates within porphyrin-containing compound metabolism; protoheme biosynthesis; protoheme from protoporphyrin-IX: step 1/1. In terms of biological role, catalyzes the ferrous insertion into protoporphyrin IX. The chain is Ferrochelatase from Thermoplasma acidophilum (strain ATCC 25905 / DSM 1728 / JCM 9062 / NBRC 15155 / AMRC-C165).